A 188-amino-acid polypeptide reads, in one-letter code: Mediator of RNA polymerase II transcription subunit 29 (188 aa).

The span at 1–11 shows a compositional bias: polar residues; that stretch reads MAMLLNQSQPP. Positions 1–27 are disordered; it reads MAMLLNQSQPPQGREGGGTQVGSLGPG.

This sequence belongs to the Mediator complex subunit 29 family. Component of the Mediator complex.

The protein localises to the nucleus. Component of the Mediator complex, a coactivator involved in the regulated transcription of nearly all RNA polymerase II-dependent genes. Mediator functions as a bridge to convey information from gene-specific regulatory proteins to the basal RNA polymerase II transcription machinery. Mediator is recruited to promoters by direct interactions with regulatory proteins and serves as a scaffold for the assembly of a functional preinitiation complex with RNA polymerase II and the general transcription factors. The sequence is that of Mediator of RNA polymerase II transcription subunit 29 (med29) from Xenopus tropicalis (Western clawed frog).